The sequence spans 220 residues: Glycerol-3-phosphate acyltransferase (220 aa).

6 helical membrane-spanning segments follow: residues 11-31 (INVI…GYAL), 70-90 (LLVL…SKLF), 96-116 (LQWM…FLNF), 127-147 (GSVV…WFFV), 153-173 (ISSL…FFVP), and 192-212 (PMVL…FNLL).

Belongs to the PlsY family. Probably interacts with PlsX.

The protein localises to the cell inner membrane. It carries out the reaction an acyl phosphate + sn-glycerol 3-phosphate = a 1-acyl-sn-glycero-3-phosphate + phosphate. It functions in the pathway lipid metabolism; phospholipid metabolism. Its function is as follows. Catalyzes the transfer of an acyl group from acyl-phosphate (acyl-PO(4)) to glycerol-3-phosphate (G3P) to form lysophosphatidic acid (LPA). This enzyme utilizes acyl-phosphate as fatty acyl donor, but not acyl-CoA or acyl-ACP. The protein is Glycerol-3-phosphate acyltransferase of Helicobacter pylori (strain J99 / ATCC 700824) (Campylobacter pylori J99).